Consider the following 435-residue polypeptide: Salicylate hydroxylase (435 aa).

12-41 is a binding site for FAD; it reads RVAIVGGGISGLALALSLCKHSHLNVQLFE.

The cofactor is FAD.

It carries out the reaction salicylate + NADH + O2 + 2 H(+) = catechol + CO2 + NAD(+) + H2O. Its pathway is aromatic compound metabolism; naphthalene degradation. The chain is Salicylate hydroxylase (nahG) from Pseudomonas putida (Arthrobacter siderocapsulatus).